Consider the following 260-residue polypeptide: Imidazole glycerol phosphate synthase subunit HisF (260 aa).

Active-site residues include D11 and D130.

This sequence belongs to the HisA/HisF family. As to quaternary structure, heterodimer of HisH and HisF.

It localises to the cytoplasm. The enzyme catalyses 5-[(5-phospho-1-deoxy-D-ribulos-1-ylimino)methylamino]-1-(5-phospho-beta-D-ribosyl)imidazole-4-carboxamide + L-glutamine = D-erythro-1-(imidazol-4-yl)glycerol 3-phosphate + 5-amino-1-(5-phospho-beta-D-ribosyl)imidazole-4-carboxamide + L-glutamate + H(+). It participates in amino-acid biosynthesis; L-histidine biosynthesis; L-histidine from 5-phospho-alpha-D-ribose 1-diphosphate: step 5/9. Its function is as follows. IGPS catalyzes the conversion of PRFAR and glutamine to IGP, AICAR and glutamate. The HisF subunit catalyzes the cyclization activity that produces IGP and AICAR from PRFAR using the ammonia provided by the HisH subunit. This is Imidazole glycerol phosphate synthase subunit HisF from Psychrobacter cryohalolentis (strain ATCC BAA-1226 / DSM 17306 / VKM B-2378 / K5).